Consider the following 157-residue polypeptide: SsrA-binding protein (157 aa).

The protein belongs to the SmpB family.

Its subcellular location is the cytoplasm. Its function is as follows. Required for rescue of stalled ribosomes mediated by trans-translation. Binds to transfer-messenger RNA (tmRNA), required for stable association of tmRNA with ribosomes. tmRNA and SmpB together mimic tRNA shape, replacing the anticodon stem-loop with SmpB. tmRNA is encoded by the ssrA gene; the 2 termini fold to resemble tRNA(Ala) and it encodes a 'tag peptide', a short internal open reading frame. During trans-translation Ala-aminoacylated tmRNA acts like a tRNA, entering the A-site of stalled ribosomes, displacing the stalled mRNA. The ribosome then switches to translate the ORF on the tmRNA; the nascent peptide is terminated with the 'tag peptide' encoded by the tmRNA and targeted for degradation. The ribosome is freed to recommence translation, which seems to be the essential function of trans-translation. This is SsrA-binding protein from Chromohalobacter salexigens (strain ATCC BAA-138 / DSM 3043 / CIP 106854 / NCIMB 13768 / 1H11).